The chain runs to 133 residues: Small ribosomal subunit protein uS8 (133 aa).

Belongs to the universal ribosomal protein uS8 family. Part of the 30S ribosomal subunit.

One of the primary rRNA binding proteins, it binds directly to 16S rRNA central domain where it helps coordinate assembly of the platform of the 30S subunit. The chain is Small ribosomal subunit protein uS8 from Saccharolobus islandicus (strain L.S.2.15 / Lassen #1) (Sulfolobus islandicus).